Consider the following 314-residue polypeptide: Ribosomal RNA small subunit methyltransferase H (314 aa).

S-adenosyl-L-methionine-binding positions include 36 to 38, Asp-56, Phe-80, Asp-102, and Gln-109; that span reads GGH. The tract at residues 278-300 is disordered; that stretch reads GGRSLKSIGKMKPSEEEVADNPR. Residues 289 to 300 show a composition bias toward basic and acidic residues; it reads KPSEEEVADNPR.

This sequence belongs to the methyltransferase superfamily. RsmH family.

The protein resides in the cytoplasm. The catalysed reaction is cytidine(1402) in 16S rRNA + S-adenosyl-L-methionine = N(4)-methylcytidine(1402) in 16S rRNA + S-adenosyl-L-homocysteine + H(+). In terms of biological role, specifically methylates the N4 position of cytidine in position 1402 (C1402) of 16S rRNA. This is Ribosomal RNA small subunit methyltransferase H from Photorhabdus laumondii subsp. laumondii (strain DSM 15139 / CIP 105565 / TT01) (Photorhabdus luminescens subsp. laumondii).